The following is a 206-amino-acid chain: Small ribosomal subunit protein uS7 (206 aa).

Belongs to the universal ribosomal protein uS7 family. In terms of assembly, component of the small ribosomal subunit.

Its subcellular location is the cytoplasm. Its function is as follows. Component of the small ribosomal subunit. The ribosome is a large ribonucleoprotein complex responsible for the synthesis of proteins in the cell. The sequence is that of Small ribosomal subunit protein uS7 from Entamoeba histolytica (strain ATCC 30459 / HM-1:IMSS / ABRM).